A 203-amino-acid polypeptide reads, in one-letter code: dITP/XTP pyrophosphatase (203 aa).

A substrate-binding site is contributed by S8 to K13. Residues D40 and D69 each coordinate Mg(2+). D69 serves as the catalytic Proton acceptor. Residues S70, F152–D155, K175, and H180–R181 contribute to the substrate site.

Belongs to the HAM1 NTPase family. In terms of assembly, homodimer. The cofactor is Mg(2+).

The catalysed reaction is XTP + H2O = XMP + diphosphate + H(+). It carries out the reaction dITP + H2O = dIMP + diphosphate + H(+). It catalyses the reaction ITP + H2O = IMP + diphosphate + H(+). Its function is as follows. Pyrophosphatase that catalyzes the hydrolysis of nucleoside triphosphates to their monophosphate derivatives, with a high preference for the non-canonical purine nucleotides XTP (xanthosine triphosphate), dITP (deoxyinosine triphosphate) and ITP. Seems to function as a house-cleaning enzyme that removes non-canonical purine nucleotides from the nucleotide pool, thus preventing their incorporation into DNA/RNA and avoiding chromosomal lesions. In Nitrosomonas europaea (strain ATCC 19718 / CIP 103999 / KCTC 2705 / NBRC 14298), this protein is dITP/XTP pyrophosphatase.